Consider the following 256-residue polypeptide: 5-keto-4-deoxy-D-glucarate aldolase (256 aa).

Residue His-50 is the Proton acceptor of the active site. Gln-151 contributes to the substrate binding site. Glu-153 contributes to the Mg(2+) binding site. Residues Ser-178 and Asp-179 each contribute to the substrate site. Asp-179 is a binding site for Mg(2+).

It belongs to the HpcH/HpaI aldolase family. KDGluc aldolase subfamily. Homohexamer; trimer of dimers. Mg(2+) is required as a cofactor.

It carries out the reaction 5-dehydro-4-deoxy-D-glucarate = 2-hydroxy-3-oxopropanoate + pyruvate. It catalyses the reaction 2-dehydro-3-deoxy-D-glucarate = 2-hydroxy-3-oxopropanoate + pyruvate. The protein operates within carbohydrate acid metabolism; galactarate degradation; D-glycerate from galactarate: step 2/3. Its function is as follows. Catalyzes the reversible retro-aldol cleavage of both 5-keto-4-deoxy-D-glucarate and 2-keto-3-deoxy-D-glucarate to pyruvate and tartronic semialdehyde. This is 5-keto-4-deoxy-D-glucarate aldolase from Salmonella agona (strain SL483).